Reading from the N-terminus, the 469-residue chain is Glutamate--tRNA ligase (469 aa).

The 'HIGH' region signature appears at 11–21 (PSPTGFIHLGN). Residues 243–247 (KMSKR) carry the 'KMSKS' region motif. Lys-246 lines the ATP pocket.

Belongs to the class-I aminoacyl-tRNA synthetase family. Glutamate--tRNA ligase type 1 subfamily. As to quaternary structure, monomer.

Its subcellular location is the cytoplasm. It carries out the reaction tRNA(Glu) + L-glutamate + ATP = L-glutamyl-tRNA(Glu) + AMP + diphosphate. Catalyzes the attachment of glutamate to tRNA(Glu) in a two-step reaction: glutamate is first activated by ATP to form Glu-AMP and then transferred to the acceptor end of tRNA(Glu). This chain is Glutamate--tRNA ligase, found in Burkholderia lata (strain ATCC 17760 / DSM 23089 / LMG 22485 / NCIMB 9086 / R18194 / 383).